The primary structure comprises 479 residues: Anaerobic nitric oxide reductase flavorubredoxin (479 aa).

Positions 30-210 (LRGSSYNSYL…PFSRLVTPKI (181 aa)) are zinc metallo-hydrolase. Residues histidine 79, glutamate 81, aspartate 83, histidine 147, aspartate 166, and histidine 227 each contribute to the Fe cation site. A Flavodoxin-like domain is found at 254–393 (ITIFYDTMSN…LCRQHGRDIA (140 aa)). FMN is bound by residues 260–264 (TMSNN) and 342–369 (AFGS…EMSL). One can recognise a Rubredoxin-like domain in the interval 423-474 (GPKMQCSVCQWIYDPALGEPLQDVAPGTPWSEVPDNFLCPECSLGKDVFDVL). Residues cysteine 428, cysteine 431, cysteine 461, and cysteine 464 each coordinate Fe cation.

In the N-terminal section; belongs to the zinc metallo-hydrolase group 3 family. As to quaternary structure, homotetramer. Fe cation serves as cofactor. The cofactor is FMN.

Its subcellular location is the cytoplasm. It participates in nitrogen metabolism; nitric oxide reduction. In terms of biological role, anaerobic nitric oxide reductase; uses NADH to detoxify nitric oxide (NO), protecting several 4Fe-4S NO-sensitive enzymes. Has at least 2 reductase partners, only one of which (NorW, flavorubredoxin reductase) has been identified. NO probably binds to the di-iron center; electrons enter from the NorW at rubredoxin and are transferred sequentially to the FMN center and the di-iron center. Also able to function as an aerobic oxygen reductase. The sequence is that of Anaerobic nitric oxide reductase flavorubredoxin from Salmonella paratyphi A (strain ATCC 9150 / SARB42).